The following is a 157-amino-acid chain: Crossover junction endodeoxyribonuclease RuvC (157 aa).

Residues D7, E66, and D139 contribute to the active site. Residues D7, E66, and D139 each coordinate Mg(2+).

The protein belongs to the RuvC family. As to quaternary structure, homodimer which binds Holliday junction (HJ) DNA. The HJ becomes 2-fold symmetrical on binding to RuvC with unstacked arms; it has a different conformation from HJ DNA in complex with RuvA. In the full resolvosome a probable DNA-RuvA(4)-RuvB(12)-RuvC(2) complex forms which resolves the HJ. Requires Mg(2+) as cofactor.

Its subcellular location is the cytoplasm. The enzyme catalyses Endonucleolytic cleavage at a junction such as a reciprocal single-stranded crossover between two homologous DNA duplexes (Holliday junction).. In terms of biological role, the RuvA-RuvB-RuvC complex processes Holliday junction (HJ) DNA during genetic recombination and DNA repair. Endonuclease that resolves HJ intermediates. Cleaves cruciform DNA by making single-stranded nicks across the HJ at symmetrical positions within the homologous arms, yielding a 5'-phosphate and a 3'-hydroxyl group; requires a central core of homology in the junction. The consensus cleavage sequence is 5'-(A/T)TT(C/G)-3'. Cleavage occurs on the 3'-side of the TT dinucleotide at the point of strand exchange. HJ branch migration catalyzed by RuvA-RuvB allows RuvC to scan DNA until it finds its consensus sequence, where it cleaves and resolves the cruciform DNA. The sequence is that of Crossover junction endodeoxyribonuclease RuvC from Campylobacter concisus (strain 13826).